A 26-amino-acid chain; its full sequence is Hemocyanin subunit 3 (26 aa).

Belongs to the tyrosinase family. Hemocyanin subfamily. Hemolymph.

It is found in the secreted. Its subcellular location is the extracellular space. Its function is as follows. Hemocyanins are copper-containing oxygen carriers occurring freely dissolved in the hemolymph of many mollusks and arthropods. The sequence is that of Hemocyanin subunit 3 from Homarus americanus (American lobster).